The sequence spans 204 residues: Lymphotoxin-alpha (204 aa).

An N-terminal signal peptide occupies residues 1–33 (MTPPGRLYLLRVCSTPPLLLLGLLLALPLEAQG). Residues 62–204 (PAAHLVGDPS…SSVFFGAFAL (143 aa)) enclose the THD domain. The N-linked (GlcNAc...) asparagine glycan is linked to Asn-95. Cys-119 and Cys-155 are oxidised to a cystine.

It belongs to the tumor necrosis factor family. In terms of assembly, homotrimer, and heterotrimer of either two LTB and one LTA subunits or (less prevalent) two LTA and one LTB subunits. Interacts with TNFRSF14.

The protein localises to the secreted. The protein resides in the membrane. In terms of biological role, cytokine that in its homotrimeric form binds to TNFRSF1A/TNFR1, TNFRSF1B/TNFBR and TNFRSF14/HVEM. In its heterotrimeric form with LTB binds to TNFRSF3/LTBR. Lymphotoxin is produced by lymphocytes and is cytotoxic for a wide range of tumor cells in vitro and in vivo. This chain is Lymphotoxin-alpha (LTA), found in Bos taurus (Bovine).